We begin with the raw amino-acid sequence, 457 residues long: Acetate--CoA ligase [ADP-forming] II subunit alpha (457 aa).

Belongs to the acetate CoA ligase alpha subunit family. As to quaternary structure, heterotetramer of two alpha and two beta subunits.

The enzyme catalyses acetate + ATP + CoA = acetyl-CoA + ADP + phosphate. In terms of biological role, catalyzes the reversible formation of acetate and ATP from acetyl-CoA by using ADP and phosphate. Can use other substrates such as phenylacetyl-CoA, indoleacetyl-CoA and isobutyryl-CoA, but not succinyl-CoA. Seems to be involved primarily in the degradation of aryl-CoA esters to the corresponding acids. Participates in the conversion of acetyl-CoA to acetate and in the degradation of branched-chain amino acids via branched-chain-acyl-CoA esters. The chain is Acetate--CoA ligase [ADP-forming] II subunit alpha from Pyrococcus furiosus (strain ATCC 43587 / DSM 3638 / JCM 8422 / Vc1).